The following is a 167-amino-acid chain: Protein DLS1 (167 aa).

Ser17 bears the Phosphoserine mark.

As to quaternary structure, component of the ISW2 complex, which at least consists of ISW2, ITC1, DLS1 and DPB4.

It is found in the nucleus. Functions as a component of the ISW2 complex, which acts in remodeling the chromatin by catalyzing an ATP-dependent alteration in the structure of nucleosomal DNA. The ISW2 complex is involved in coordinating transcriptional repression and in inheritance of telomeric silencing. It is involved in repression of MAT a-specific genes, INO1, and early meiotic genes during mitotic growth dependent upon transcription factor UME6 and in a parallel pathway to the RPD3-SIN3 histone deacetylase complex. DLS1 is partially required for the ISW2 complex chromatin remodeling activity and is not required for its interaction with chromatin. The protein is Protein DLS1 (DLS1) of Saccharomyces cerevisiae (strain ATCC 204508 / S288c) (Baker's yeast).